The sequence spans 347 residues: Probable inactive UDP-arabinopyranose mutase 2 (347 aa).

An N-linked (Glc...) arginine glycan is attached at R145.

It belongs to the RGP family. As to quaternary structure, heteromers with UAM1 and UAM3. Is not reversibly glycosylated in vitro by UDP-glucose, UDP-xylose and UDP-galactose.

Its subcellular location is the golgi apparatus. Its function is as follows. Probable inactive UDP-L-arabinose mutase. Inactive in vitro, but associates with UAM1 and UAM3. The chain is Probable inactive UDP-arabinopyranose mutase 2 from Oryza sativa subsp. japonica (Rice).